The chain runs to 534 residues: Light-independent protochlorophyllide reductase subunit B (534 aa).

Residue Asp-36 participates in [4Fe-4S] cluster binding. The Proton donor role is filled by Asp-274. 409-410 (GL) contacts substrate. The tract at residues 426 to 446 (DEAGPSHHGGKAVPASAPRAD) is disordered.

The protein belongs to the ChlB/BchB/BchZ family. As to quaternary structure, protochlorophyllide reductase is composed of three subunits; BchL, BchN and BchB. Forms a heterotetramer of two BchB and two BchN subunits. It depends on [4Fe-4S] cluster as a cofactor.

It catalyses the reaction chlorophyllide a + oxidized 2[4Fe-4S]-[ferredoxin] + 2 ADP + 2 phosphate = protochlorophyllide a + reduced 2[4Fe-4S]-[ferredoxin] + 2 ATP + 2 H2O. It functions in the pathway porphyrin-containing compound metabolism; bacteriochlorophyll biosynthesis (light-independent). Functionally, component of the dark-operative protochlorophyllide reductase (DPOR) that uses Mg-ATP and reduced ferredoxin to reduce ring D of protochlorophyllide (Pchlide) to form chlorophyllide a (Chlide). This reaction is light-independent. The NB-protein (BchN-BchB) is the catalytic component of the complex. The protein is Light-independent protochlorophyllide reductase subunit B of Cereibacter sphaeroides (strain ATCC 17029 / ATH 2.4.9) (Rhodobacter sphaeroides).